A 253-amino-acid chain; its full sequence is 5-oxoprolinase subunit A (253 aa).

Belongs to the LamB/PxpA family. As to quaternary structure, forms a complex composed of PxpA, PxpB and PxpC.

It carries out the reaction 5-oxo-L-proline + ATP + 2 H2O = L-glutamate + ADP + phosphate + H(+). Its function is as follows. Catalyzes the cleavage of 5-oxoproline to form L-glutamate coupled to the hydrolysis of ATP to ADP and inorganic phosphate. This is 5-oxoprolinase subunit A from Bacillus cereus (strain AH187).